The sequence spans 439 residues: Proline--tRNA ligase (439 aa).

Belongs to the class-II aminoacyl-tRNA synthetase family. ProS type 2 subfamily. As to quaternary structure, homodimer.

It localises to the cytoplasm. It carries out the reaction tRNA(Pro) + L-proline + ATP = L-prolyl-tRNA(Pro) + AMP + diphosphate. In terms of biological role, catalyzes the attachment of proline to tRNA(Pro) in a two-step reaction: proline is first activated by ATP to form Pro-AMP and then transferred to the acceptor end of tRNA(Pro). This Parvibaculum lavamentivorans (strain DS-1 / DSM 13023 / NCIMB 13966) protein is Proline--tRNA ligase.